A 104-amino-acid polypeptide reads, in one-letter code: Gastrin (104 aa).

An N-terminal signal peptide occupies residues 1–21 (MQRLCAYVLIHVLALAACSEA). Residues 22–58 (SWKPGFQLQDASSGPGANRGKEPHELDRLGPASHHRR) constitute a propeptide that is removed on maturation. The segment at 27–67 (FQLQDASSGPGANRGKEPHELDRLGPASHHRRQLGLQGPPH) is disordered. Residues 40–49 (RGKEPHELDR) are compositionally biased toward basic and acidic residues. Pyrrolidone carboxylic acid; in form big gastrin is present on Gln-59. Position 76 is a pyrrolidone carboxylic acid; in form gastrin (Gln-76). Tyr-87 carries the sulfotyrosine; partial modification. Residue Phe-92 is modified to Phenylalanine amide. The residue at position 96 (Ser-96) is a Phosphoserine. Positions 96–104 (SAEEGDQRP) are excised as a propeptide.

Belongs to the gastrin/cholecystokinin family. Sulfation enhances proteolytic processing, and blocks peptide degradation. Levels of sulfation differ between proteolytically-cleaved gastrins. Thus, gastrin-6 is almost 73% sulfated, whereas the larger gastrins are less than 50% sulfated. Sulfation levels are also tissue-specific.

The protein localises to the secreted. In terms of biological role, gastrin stimulates the stomach mucosa to produce and secrete hydrochloric acid and the pancreas to secrete its digestive enzymes. It also stimulates smooth muscle contraction and increases blood circulation and water secretion in the stomach and intestine. The protein is Gastrin (GAST) of Sus scrofa (Pig).